We begin with the raw amino-acid sequence, 1138 residues long: Nuclear pore complex-interacting protein family member B13 (1138 aa).

Residues 73-93 traverse the membrane as a helical segment; the sequence is VVITLWIVYLWVSLLKTIFWS. 2 disordered regions span residues 242–578 and 747–1138; these read RMGH…NIKT and ERLR…RRLS. Residues 252–263 show a composition bias toward polar residues; it reads QQHSITDNSLSL. The segment covering 349–359 has biased composition (pro residues); the sequence is PLPPSAPPSAP. Basic and acidic residues-rich tracts occupy residues 406 to 416, 448 to 458, 490 to 500, 532 to 542, 782 to 792, 824 to 834, 866 to 876, 908 to 918, 950 to 960, and 992 to 1002; these read DNIKTPAERLR.

It belongs to the NPIP family.

The protein resides in the membrane. This Homo sapiens (Human) protein is Nuclear pore complex-interacting protein family member B13.